The primary structure comprises 754 residues: Catalase-peroxidase (754 aa).

Residues 1 to 29 (MGTQPARKLRNRVFPHPHNHRKEKPMAND) are disordered. A compositionally biased stretch (basic residues) spans 7-23 (RKLRNRVFPHPHNHRKE). The Tryptophan radical intermediate role is filled by W106. The segment at residues 122–249 (WHAAGTYRIA…LAAVQMGLIY (128 aa)) is a cross-link (tryptophyl-tyrosyl-methioninium (Trp-Tyr) (with M-275)). H123 acts as the Proton acceptor in catalysis. Residues 249–275 (YVNPEGVDGHPDPLCTAQDVRTTFARM) constitute a cross-link (tryptophyl-tyrosyl-methioninium (Tyr-Met) (with W-122)). H290 contacts heme b.

The protein belongs to the peroxidase family. Peroxidase/catalase subfamily. As to quaternary structure, homodimer. Heme b serves as cofactor. In terms of processing, formation of the three residue Trp-Tyr-Met cross-link is important for the catalase, but not the peroxidase activity of the enzyme.

It catalyses the reaction H2O2 + AH2 = A + 2 H2O. The catalysed reaction is 2 H2O2 = O2 + 2 H2O. Bifunctional enzyme with both catalase and broad-spectrum peroxidase activity. Also displays NADH oxidase, isoniazid hydrazine lyase and isonicotinoyl-NAD synthase activities. This is Catalase-peroxidase from Synechocystis sp. (strain ATCC 27184 / PCC 6803 / Kazusa).